Here is a 333-residue protein sequence, read N- to C-terminus: MMQHLFEKLFRAESMSQEESQQLFAAIVRGELEPSQLAAVLISMKVRGETPAEIAGAAQALLADAQHFPRPDYLFADIVGTGGDGTNSINISTASAFVAASCGVKVAKHGNRSVSSRSGSSDLLAAFGIRLDMSAEQSRLALDDLGVCFLFAPQYHTGFRHAMPVRQQLKTRTLFNVLGPLINPARPPLALIGVYSPELVLPIAQTLKVLGYQRAAVVHGGGMDEVAIHAPTQVAELNNGSIESYQLTPEDFGLNRYPLAALQGGMPEENRDILARLLQGKGETAHAAAVAANVALLLKLYGQENLRHNAQQALEMIHSGQAFDRVTALAARG.

5-phospho-alpha-D-ribose 1-diphosphate contacts are provided by residues G80, 83 to 84 (GD), S88, 90 to 93 (NIST), 108 to 116 (KHGNRSVSS), and S120. G80 contributes to the anthranilate binding site. S92 contributes to the Mg(2+) binding site. An anthranilate-binding site is contributed by N111. R166 contributes to the anthranilate binding site. Mg(2+)-binding residues include D224 and E225.

Belongs to the anthranilate phosphoribosyltransferase family. As to quaternary structure, homodimer. It depends on Mg(2+) as a cofactor.

It carries out the reaction N-(5-phospho-beta-D-ribosyl)anthranilate + diphosphate = 5-phospho-alpha-D-ribose 1-diphosphate + anthranilate. It participates in amino-acid biosynthesis; L-tryptophan biosynthesis; L-tryptophan from chorismate: step 2/5. Functionally, catalyzes the transfer of the phosphoribosyl group of 5-phosphorylribose-1-pyrophosphate (PRPP) to anthranilate to yield N-(5'-phosphoribosyl)-anthranilate (PRA). This is Anthranilate phosphoribosyltransferase from Yersinia pseudotuberculosis serotype O:1b (strain IP 31758).